The chain runs to 1717 residues: PH domain leucine-rich repeat-containing protein phosphatase 1 (1717 aa).

An N-acetylmethionine modification is found at Met-1. Disordered regions lie at residues Met-1–Ala-25, Leu-41–Ser-118, Ala-136–Gly-156, and Pro-252–Thr-470. A compositionally biased stretch (low complexity) spans Ala-98–Pro-110. A compositionally biased stretch (pro residues) spans Glu-262–Pro-274. Low complexity-rich tracts occupy residues Ser-313–Pro-325 and Pro-333–Ser-345. The residue at position 317 (Ser-317) is a Phosphoserine. Polar residues-rich tracts occupy residues Asp-346–Ser-358 and Gln-408–Gln-417. Ser-412 carries the phosphoserine modification. The region spanning Arg-536–Ser-636 is the PH domain. LRR repeat units follow at residues Arg-638–Ser-659, Asp-661–Arg-682, Lys-692–Ser-712, Thr-715–Met-736, Asn-738–Lys-760, Gln-761–Thr-783, Ala-784–Arg-804, His-808–Gln-831, His-832–Asn-853, Phe-873–Asn-894, Tyr-895–Ser-916, Lys-918–Asn-939, Ser-941–Thr-962, Ser-963–Lys-984, Ser-987–Glu-1008, Ile-1013–Thr-1033, His-1037–Lys-1058, Glu-1061–Cys-1082, Arg-1084–Pro-1105, Glu-1106–Pro-1127, and Lys-1129–Leu-1150. The segment at Pro-1076 to Leu-1205 is interaction with NHERF1. In terms of domain architecture, PPM-type phosphatase spans Ser-1175–Leu-1422. Asp-1210, Gly-1211, Lys-1374, and Asp-1413 together coordinate Mn(2+). Disordered stretches follow at residues Asp-1458–Tyr-1510 and Glu-1673–Leu-1717. Positions Ser-1468–Glu-1489 are enriched in low complexity. Residues Thr-1715–Leu-1717 carry the PDZ-binding; required for interaction with NHERF1 motif.

As to quaternary structure, interacts with the nucleotide free form of K-Ras (KRAS) via its LRR repeats. Interacts with AKT2, AKT3, PRKCB isoform beta-II, STK4, RPS6KB1, RAF1. Isoform 1 (predominantly) and isoform 2 interact with BRAP. Interacts with FKBP5; FKBP5 acts as a scaffold for PHLPP1 and Akt. Interacts with SCRIB; SCRIB acts as a scaffold for PHLPP1 and Akt. Interacts with NHERF1; NHERF1 scaffolds a heterotrimeric complex with PTEN at the plasma membrane. Interacts with WDR48 and USP12. Mn(2+) is required as a cofactor. In colorectal cancer tissue, expression is highest in the surface epithelium of normal colonic mucosa adjacent to the cancer tissue but is largely excluded from the crypt bases. Expression is lost or significantly decreased in 78% of tested tumors (at protein level). Ubiquitously expressed in non-cancerous tissues.

The protein resides in the cytoplasm. It localises to the membrane. The protein localises to the nucleus. Its subcellular location is the cell membrane. It catalyses the reaction O-phospho-L-seryl-[protein] + H2O = L-seryl-[protein] + phosphate. The catalysed reaction is O-phospho-L-threonyl-[protein] + H2O = L-threonyl-[protein] + phosphate. With respect to regulation, insensitive to okadaic acid. Deubiquitination by WDR48-USP12 complex positively regulates PHLPP1 stability. In terms of biological role, protein phosphatase involved in regulation of Akt and PKC signaling. Mediates dephosphorylation in the C-terminal domain hydrophobic motif of members of the AGC Ser/Thr protein kinase family; specifically acts on 'Ser-473' of AKT2 and AKT3, 'Ser-660' of PRKCB and 'Ser-657' of PRKCA. Isoform 2 seems to have a major role in regulating Akt signaling in hippocampal neurons. Akt regulates the balance between cell survival and apoptosis through a cascade that primarily alters the function of transcription factors that regulate pro- and antiapoptotic genes. Dephosphorylation of 'Ser-473' of Akt triggers apoptosis and suppression of tumor growth. Dephosphorylation of PRKCA and PRKCB leads to their destabilization and degradation. Dephosphorylates STK4 on 'Thr-387' leading to STK4 activation and apoptosis. Dephosphorylates RPS6KB1 and is involved in regulation of cap-dependent translation. Inhibits cancer cell proliferation and may act as a tumor suppressor. Dephosphorylates RAF1 inhibiting its kinase activity. May act as a negative regulator of K-Ras signaling in membrane rafts. Involved in the hippocampus-dependent long-term memory formation. Involved in circadian control by regulating the consolidation of circadian periodicity after resetting. Involved in development and function of regulatory T-cells. This chain is PH domain leucine-rich repeat-containing protein phosphatase 1 (PHLPP1), found in Homo sapiens (Human).